The following is a 443-amino-acid chain: MKEIGALQAEYPLVNKLIATKEVFWINPHIEKYERAIKDSPLNEENVKDAEERLKRFAPYIAKVFPETKGTNGIIESPLVKIPSMKEALETNYKQTILGELLLKCDSHLPISGSIKARGGIYEVLKHAEQLALQHGMLTEEDDYSILDSDTCREFFSKYSIAVGSTGNLGLSIGIMSANLGFNVTVHMSADAKEWKKSLLRSKGVNVIEYEDDYSKAVEEGRRQADADPSCYFVDDENSHDLFLGYSVAASRLQKQLEELEVVVDEDHPLFVYLPCGVGGGPGGVAFGLKLLYKDNVHCFFAEPTHSPCMLLGLMTGLHDKIAVQDIGIDNVTDADGLAVGRPSGFVGKTMEPFLSGNYTVNDEELYRLLKELADTENIYLEPSALAGMIGPVKVCKEDEYLQKQQLTEKVKKGTHIVWGTGGSMVPKDVMNEYYRKGLELTI.

Position 116 is an N6-(pyridoxal phosphate)lysine (lysine 116).

This sequence belongs to the serine/threonine dehydratase family. DsdA subfamily. It depends on pyridoxal 5'-phosphate as a cofactor.

The catalysed reaction is D-serine = pyruvate + NH4(+). In Bacillus cereus (strain G9842), this protein is Probable D-serine dehydratase.